We begin with the raw amino-acid sequence, 330 residues long: Diacylglycerol acyltransferase/mycolyltransferase Ag85B (330 aa).

Residues 1 to 40 form the signal peptide; it reads MTDLSEKVRAWGRRLLVGAAAAVTLPGLIGLAGGAATANA. 82–83 serves as a coordination point for substrate; it reads LR. Residues 98–108 are fibronectin-binding; sequence FEWYYQSGLSV. Cys-127 and Cys-132 are joined by a disulfide. Positions 166 and 194 each coordinate substrate. Catalysis depends on Ser-166, which acts as the Nucleophile. Residue Glu-270 is part of the active site. Substrate-binding positions include 272–275, Lys-279, and 302–304; these read FVRS and HSW. His-302 is an active-site residue.

It belongs to the mycobacterial A85 antigen family.

The protein resides in the secreted. It carries out the reaction 2 alpha,alpha'-trehalose 6-mycolate = alpha,alpha'-trehalose 6,6'-bismycolate + alpha,alpha-trehalose. It catalyses the reaction an acyl-CoA + a 1,2-diacyl-sn-glycerol = a triacyl-sn-glycerol + CoA. The antigen 85 proteins (FbpA, FbpB, FbpC) are responsible for the high affinity of mycobacteria for fibronectin, a large adhesive glycoprotein, which facilitates the attachment of M.tuberculosis to murine alveolar macrophages (AMs). They also help to maintain the integrity of the cell wall by catalyzing the transfer of mycolic acids to cell wall arabinogalactan and through the synthesis of alpha,alpha-trehalose dimycolate (TDM, cord factor). They catalyze the transfer of a mycoloyl residue from one molecule of alpha,alpha-trehalose monomycolate (TMM) to another TMM, leading to the formation of TDM. The protein is Diacylglycerol acyltransferase/mycolyltransferase Ag85B (fbpB) of Mycobacterium avium.